The primary structure comprises 216 residues: Large ribosomal subunit protein uL3 (216 aa).

Residues 133–145 (GRATHGNSRSHNV) are compositionally biased toward polar residues. The tract at residues 133–153 (GRATHGNSRSHNVPGSIGMAQ) is disordered. Q153 bears the N5-methylglutamine mark.

This sequence belongs to the universal ribosomal protein uL3 family. In terms of assembly, part of the 50S ribosomal subunit. Forms a cluster with proteins L14 and L19. Methylated by PrmB.

Functionally, one of the primary rRNA binding proteins, it binds directly near the 3'-end of the 23S rRNA, where it nucleates assembly of the 50S subunit. This chain is Large ribosomal subunit protein uL3, found in Burkholderia cenocepacia (strain ATCC BAA-245 / DSM 16553 / LMG 16656 / NCTC 13227 / J2315 / CF5610) (Burkholderia cepacia (strain J2315)).